The primary structure comprises 313 residues: MNKLVFCLMGPTASGKTGLACELLTHFPFEIISVDSAMIYRDMNIGTAKPSIHELQRAPHYLIDIKDPVESYSAAQFCTDALSLCAEIIKRGNIPLLVGGTMMYFNALQKGLATLPEADEAVRKRLEEEALSQGWDFLYQKLSQLDPVTAARIHAHDTQRIQRALEVYYLTGSTLSTYLTGPHERPDYYFVNLALFPEQRSWLHERIAQRFDAMLSEGFIEEVQQLQAKWPIQINLPSMRCVGYRQILQHLAGHYDYETMREKGIAATRQLAKRQLTWLRHWEGALFYDSQNVGFNTDIIAKIREILDNTVSN.

10 to 17 (GPTASGKT) contacts ATP. 12 to 17 (TASGKT) contributes to the substrate binding site. 3 interaction with substrate tRNA regions span residues 35–38 (DSAM), 159–163 (QRIQR), and 240–245 (RCVGYR).

This sequence belongs to the IPP transferase family. Monomer. The cofactor is Mg(2+).

It catalyses the reaction adenosine(37) in tRNA + dimethylallyl diphosphate = N(6)-dimethylallyladenosine(37) in tRNA + diphosphate. Catalyzes the transfer of a dimethylallyl group onto the adenine at position 37 in tRNAs that read codons beginning with uridine, leading to the formation of N6-(dimethylallyl)adenosine (i(6)A). The polypeptide is tRNA dimethylallyltransferase (Legionella pneumophila subsp. pneumophila (strain Philadelphia 1 / ATCC 33152 / DSM 7513)).